Consider the following 330-residue polypeptide: Protein pelota homolog (330 aa).

The protein belongs to the eukaryotic release factor 1 family. Pelota subfamily. Monomer. It depends on a divalent metal cation as a cofactor.

The protein resides in the cytoplasm. May function in recognizing stalled ribosomes, interact with stem-loop structures in stalled mRNA molecules, and effect endonucleolytic cleavage of the mRNA. May play a role in the release non-functional ribosomes and degradation of damaged mRNAs. Has endoribonuclease activity. The chain is Protein pelota homolog from Pyrobaculum islandicum (strain DSM 4184 / JCM 9189 / GEO3).